A 1192-amino-acid polypeptide reads, in one-letter code: MTAADKHLYDTDLLDVLSQRVMVGDGAMGTQLQAADLTLDDFRGLEGCNEILNETRPDVLETIHRNYFEAGADAVETNTFGCNLSNLGDYDIADRIRDLSQKGTAIARRVADELGSPDRKRYVLGSMGPGTKLPTLGHTEYAVIRDAYTEAALGMLDGGADAILVETCQDLLQLKAAVLGSRRAMTRAGRHIPVFAHVTVETTGTMLLGSEIGAALTAVEPLGVDMIGLNCATGPAEMSEHLRHLSRHARIPVSVMPNAGLPVLGAKGAEYPLLPDELAEALAGFIAEFGLSLVGGCCGTTPAHIREVAAAVANIKRPERQVSYEPSVSSLYTAIPFAQDASVLVIGERTNANGSKGFREAMIAEDYQKCLDIAKDQTRDGAHLLDLCVDYVGRDGVADMKALASRLATSSTLPIMLDSTETAVLQAGLEHLGGRCAINSVNYEDGDGPESRFAKTMALVAEHGAAVVALTIDEEGQARTAQKKVEIAERLINDITGNWGVDESSILIDTLTFTIATGQEESRRDGIETIEAIRELKKRHPDVQTTLGLSNISFGLNPAARQVLNSVFLHECQEAGLDSAIVHASKILPMNRIPEEQRNVALDLVYDRRREDYDPLQELMRLFEGVSAASSKEDRLAELAGLPLFERLAQRIVDGERNGLDADLDEAMTQKPPLQIINEHLLAGMKTVGELFGSGQMQLPFVLQSAEVMKAAVAYLEPHMERSDDDSGKGRIVLATVKGDVHDIGKNLVDIILSNNGYEVVNIGIKQPIATILEVAEDKSADVVGMSGLLVKSTVVMKENLEEMNTRGVAEKFPVLLGGAALTRSYVENDLAEIYQGEVHYARDAFEGLKLMDTIMSAKRGEAPDENSPEAIKAREKEAERKARHQRSKRIAAQRKAAEEPVEVPERSDVAADIEVPAPPFWGSRIVKGLAVADYTGLLDERALFLGQWGLRGQRGGEGPSYEDLVETEGRPRLRYWLDRLSTDGILAHAAVVYGYFPAVSEGNDIVVLTEPKPDAPVRYRFHFPRQQRGRFLCIADFIRSRELAAERGEVDVLPFQLVTMGQPIADFANELFASNAYRDYLEVHGIGVQLTEALAEYWHRRIREELKFSGDRAMAAEDPEAKEDYFKLGYRGARFAFGYGACPDLEDRAKMMALLEPERIGVTLSEELQLHPEQSTDAFVLHHPEAKYFNV.

Residues 1–312 (MTAADKHLYD…AHIREVAAAV (312 aa)) enclose the Hcy-binding domain. The Zn(2+) site is built by cysteine 231, cysteine 297, and cysteine 298. Residues 343-601 (VLVIGERTNA…RIPEEQRNVA (259 aa)) enclose the Pterin-binding domain. One can recognise a B12-binding N-terminal domain in the interval 635-728 (RLAELAGLPL…HMERSDDDSG (94 aa)). Positions 729–866 (KGRIVLATVK…SAKRGEAPDE (138 aa)) constitute a B12-binding domain. Methylcob(III)alamin-binding positions include 739–743 (GDVHD), histidine 742, serine 787, and alanine 845. The segment at 860–904 (RGEAPDENSPEAIKAREKEAERKARHQRSKRIAAQRKAAEEPVEV) is disordered. A compositionally biased stretch (basic and acidic residues) spans 872-881 (IKAREKEAER). Residues 882 to 893 (KARHQRSKRIAA) show a composition bias toward basic residues. Residues 893-1192 (AQRKAAEEPV…HHPEAKYFNV (300 aa)) enclose the AdoMet activation domain. S-adenosyl-L-methionine is bound by residues aspartate 940, arginine 1135, and 1189-1190 (YF).

This sequence belongs to the vitamin-B12 dependent methionine synthase family. Methylcob(III)alamin is required as a cofactor. Requires Zn(2+) as cofactor.

It catalyses the reaction (6S)-5-methyl-5,6,7,8-tetrahydrofolate + L-homocysteine = (6S)-5,6,7,8-tetrahydrofolate + L-methionine. The protein operates within amino-acid biosynthesis; L-methionine biosynthesis via de novo pathway; L-methionine from L-homocysteine (MetH route): step 1/1. Its function is as follows. Catalyzes the transfer of a methyl group from methyl-cobalamin to homocysteine, yielding enzyme-bound cob(I)alamin and methionine. Subsequently, remethylates the cofactor using methyltetrahydrofolate. The sequence is that of Methionine synthase (metH) from Mycobacterium tuberculosis (strain ATCC 25618 / H37Rv).